The primary structure comprises 217 residues: Large ribosomal subunit protein bL21m (217 aa).

Residues 61–81 (PPKVTTATTPEAPAAVPTSTP) are compositionally biased toward low complexity. The disordered stretch occupies residues 61–87 (PPKVTTATTPEAPAAVPTSTPFSQQPP).

It belongs to the bacterial ribosomal protein bL21 family. As to quaternary structure, component of the mitochondrial large ribosomal subunit (mt-LSU). Mature N.crassa 74S mitochondrial ribosomes consist of a small (37S) and a large (54S) subunit. The 37S small subunit contains a 16S ribosomal RNA (16S mt-rRNA) and 32 different proteins. The 54S large subunit contains a 23S rRNA (23S mt-rRNA) and 42 different proteins.

The protein localises to the mitochondrion. In terms of biological role, component of the mitochondrial ribosome (mitoribosome), a dedicated translation machinery responsible for the synthesis of mitochondrial genome-encoded proteins, including at least some of the essential transmembrane subunits of the mitochondrial respiratory chain. The mitoribosomes are attached to the mitochondrial inner membrane and translation products are cotranslationally integrated into the membrane. The sequence is that of Large ribosomal subunit protein bL21m (mrpl49) from Neurospora crassa (strain ATCC 24698 / 74-OR23-1A / CBS 708.71 / DSM 1257 / FGSC 987).